The sequence spans 301 residues: Tetratricopeptide repeat domain-containing protein PYG7, chloroplastic (301 aa).

The transit peptide at 1–61 directs the protein to the chloroplast; sequence MFESNMVLQT…FHDYVFAEIS (61 aa). The next 2 membrane-spanning stretches (helical) occupy residues 82–102 and 121–141; these read TFLL…AAAA and IQLS…FYVI. TPR repeat units lie at residues 168-201, 206-239, and 240-273; these read ATEL…WDGD, AQVY…QPGY, and VTAW…DPNN.

Interacts with PSA3.

It is found in the plastid. It localises to the chloroplast thylakoid membrane. Its function is as follows. Nuclear genome-encoded factor required for the accumulation of photosystem I (PSI). Functions as a PSI biogenesis factor. Cooperates with PSA3 to promote the stable assembly of PSI in the thylakoid membrane. May target primarily the PsaC subunit. The protein is Tetratricopeptide repeat domain-containing protein PYG7, chloroplastic of Arabidopsis thaliana (Mouse-ear cress).